A 200-amino-acid polypeptide reads, in one-letter code: Imidazole glycerol phosphate synthase subunit HisH (200 aa).

The region spanning 3–200 (DVALIDAGGA…LRNFLEMSFP (198 aa)) is the Glutamine amidotransferase type-1 domain. C78 serves as the catalytic Nucleophile. Catalysis depends on residues H179 and E181.

Heterodimer of HisH and HisF.

It localises to the cytoplasm. The catalysed reaction is 5-[(5-phospho-1-deoxy-D-ribulos-1-ylimino)methylamino]-1-(5-phospho-beta-D-ribosyl)imidazole-4-carboxamide + L-glutamine = D-erythro-1-(imidazol-4-yl)glycerol 3-phosphate + 5-amino-1-(5-phospho-beta-D-ribosyl)imidazole-4-carboxamide + L-glutamate + H(+). The enzyme catalyses L-glutamine + H2O = L-glutamate + NH4(+). It participates in amino-acid biosynthesis; L-histidine biosynthesis; L-histidine from 5-phospho-alpha-D-ribose 1-diphosphate: step 5/9. In terms of biological role, IGPS catalyzes the conversion of PRFAR and glutamine to IGP, AICAR and glutamate. The HisH subunit catalyzes the hydrolysis of glutamine to glutamate and ammonia as part of the synthesis of IGP and AICAR. The resulting ammonia molecule is channeled to the active site of HisF. The polypeptide is Imidazole glycerol phosphate synthase subunit HisH (Xanthomonas euvesicatoria pv. vesicatoria (strain 85-10) (Xanthomonas campestris pv. vesicatoria)).